The primary structure comprises 375 residues: Transaldolase (375 aa).

The active-site Schiff-base intermediate with substrate is the lysine 145.

The protein belongs to the transaldolase family. Type 2 subfamily.

It is found in the cytoplasm. It catalyses the reaction D-sedoheptulose 7-phosphate + D-glyceraldehyde 3-phosphate = D-erythrose 4-phosphate + beta-D-fructose 6-phosphate. It participates in carbohydrate degradation; pentose phosphate pathway; D-glyceraldehyde 3-phosphate and beta-D-fructose 6-phosphate from D-ribose 5-phosphate and D-xylulose 5-phosphate (non-oxidative stage): step 2/3. In terms of biological role, transaldolase is important for the balance of metabolites in the pentose-phosphate pathway. In Mycobacterium leprae (strain Br4923), this protein is Transaldolase.